A 333-amino-acid chain; its full sequence is MNLYRRYGWELTLAALLVLEILLFGLSNSRMLDINVLLFSTSDFICIGIVALPLTMVIVSGGIDISFGSTIGLCAIFLGIVFQAGVPMSVAIPLTVLVGALCGLINAGLILYTGVNPLVITLGTLYLFGGSALLLSGLSGATGYEGIGGFPAAFTDFANQTLFGLPIPLVIFMLCVLLFWLLMHRTHSGRHVFLIGQSSRVARYSALPIARTLCMLYAMTGVASAISAILLVSYFGSARSDLGASFLMPAITAVVLGGANIYGGSGSILGTALAVLLVGYLQQGLQMIGTPNQISSALSGALLILVVVGRSISLHRHLIYEWLQRRRSRKASA.

Helical transmembrane passes span 7–27 (YGWE…FGLS), 45–65 (ICIG…GIDI), 67–87 (FGST…AGVP), 90–110 (VAIP…AGLI), 118–138 (LVIT…LSGL), 162–182 (LFGL…FWLL), 212–232 (TLCM…ILLV), 240–260 (SDLG…GGAN), 261–281 (IYGG…VGYL), and 288–308 (IGTP…LVVV).

Belongs to the binding-protein-dependent transport system permease family. AraH/RbsC subfamily. In terms of assembly, the complex is composed of two ATP-binding proteins (LsrA), two transmembrane proteins (LsrC and LsrD) and a solute-binding protein (LsrB).

It is found in the cell inner membrane. Its function is as follows. Part of the ABC transporter complex LsrABCD involved in autoinducer 2 (AI-2) import. Probably responsible for the translocation of the substrate across the membrane. This is Autoinducer 2 import system permease protein LsrD (lsrD) from Yersinia pestis bv. Antiqua (strain Antiqua).